The primary structure comprises 163 residues: Phosphopantetheine adenylyltransferase (163 aa).

Substrate is bound at residue threonine 11. Residues 11-12 (TF) and histidine 19 each bind ATP. Residues lysine 43, leucine 75, and arginine 89 each contribute to the substrate site. ATP-binding positions include 90 to 92 (GLR), glutamate 100, and 125 to 131 (YSFISST).

The protein belongs to the bacterial CoaD family. As to quaternary structure, homohexamer. It depends on Mg(2+) as a cofactor.

Its subcellular location is the cytoplasm. It catalyses the reaction (R)-4'-phosphopantetheine + ATP + H(+) = 3'-dephospho-CoA + diphosphate. Its pathway is cofactor biosynthesis; coenzyme A biosynthesis; CoA from (R)-pantothenate: step 4/5. Reversibly transfers an adenylyl group from ATP to 4'-phosphopantetheine, yielding dephospho-CoA (dPCoA) and pyrophosphate. The polypeptide is Phosphopantetheine adenylyltransferase (Acinetobacter baumannii (strain ACICU)).